The chain runs to 158 residues: MQGRVSVWLSQHKLAHRPSGFDYQGIEIIQIKSEDWPSIAVALYIYGFNYLRSQCAYDVMPGGFLASVYHLTKLQDNADQPEEVCIKILVSRESPKIPSIFWVWKSADFQERESYDMSGIHYESHPRLKRILMPESWIGWPLRKDYVVPNFYELQDAY.

Belongs to the complex I 30 kDa subunit family. As to quaternary structure, NDH is composed of at least 16 different subunits, 5 of which are encoded in the nucleus.

It is found in the plastid. Its subcellular location is the chloroplast thylakoid membrane. It carries out the reaction a plastoquinone + NADH + (n+1) H(+)(in) = a plastoquinol + NAD(+) + n H(+)(out). The enzyme catalyses a plastoquinone + NADPH + (n+1) H(+)(in) = a plastoquinol + NADP(+) + n H(+)(out). Functionally, NDH shuttles electrons from NAD(P)H:plastoquinone, via FMN and iron-sulfur (Fe-S) centers, to quinones in the photosynthetic chain and possibly in a chloroplast respiratory chain. The immediate electron acceptor for the enzyme in this species is believed to be plastoquinone. Couples the redox reaction to proton translocation, and thus conserves the redox energy in a proton gradient. The protein is NAD(P)H-quinone oxidoreductase subunit J, chloroplastic of Psilotum nudum (Whisk fern).